Here is a 64-residue protein sequence, read N- to C-terminus: Large ribosomal subunit protein bL35 (64 aa).

This sequence belongs to the bacterial ribosomal protein bL35 family.

The polypeptide is Large ribosomal subunit protein bL35 (Mycoplasmopsis pulmonis (strain UAB CTIP) (Mycoplasma pulmonis)).